Reading from the N-terminus, the 262-residue chain is Adenosylcobinamide-GDP ribazoletransferase (262 aa).

A run of 8 helical transmembrane segments spans residues 4–21, 37–57, 62–82, 112–132, 141–161, 181–201, 202–222, and 236–256; these read AWSG…IPIR, AFPL…FIFS, LSPL…AGGL, VGAF…LFVF, IFLI…LLIY, YDAH…CAIH, FSVW…VFVA, and DALG…IWLL.

The protein belongs to the CobS family. Mg(2+) is required as a cofactor.

It localises to the cell membrane. The enzyme catalyses alpha-ribazole + adenosylcob(III)inamide-GDP = adenosylcob(III)alamin + GMP + H(+). It catalyses the reaction alpha-ribazole 5'-phosphate + adenosylcob(III)inamide-GDP = adenosylcob(III)alamin 5'-phosphate + GMP + H(+). It participates in cofactor biosynthesis; adenosylcobalamin biosynthesis; adenosylcobalamin from cob(II)yrinate a,c-diamide: step 7/7. Its function is as follows. Joins adenosylcobinamide-GDP and alpha-ribazole to generate adenosylcobalamin (Ado-cobalamin). Also synthesizes adenosylcobalamin 5'-phosphate from adenosylcobinamide-GDP and alpha-ribazole 5'-phosphate. In Geobacillus sp. (strain WCH70), this protein is Adenosylcobinamide-GDP ribazoletransferase.